The following is a 445-amino-acid chain: ATPase PAAT (445 aa).

Phosphoserine is present on residues Ser177, Ser182, Ser254, and Ser302. The tract at residues 426-445 (PTGIPLRHYDSGERLSNGER) is disordered. Residues 432–445 (RHYDSGERLSNGER) are compositionally biased toward basic and acidic residues.

As to quaternary structure, homodimer. Interacts with ABCB7, ABCB8/MITOSUR and ABCB10.

It localises to the cytoplasm. It is found in the mitochondrion. The enzyme catalyses ATP + H2O = ADP + phosphate + H(+). ATPase that regulates mitochondrial ABC transporters ABCB7, ABCB8/MITOSUR and ABCB10. Regulates mitochondrial ferric concentration and heme biosynthesis and plays a role in the maintenance of mitochondrial homeostasis and cell survival. The protein is ATPase PAAT of Homo sapiens (Human).